A 554-amino-acid polypeptide reads, in one-letter code: Dihydroxy-acid dehydratase (554 aa).

A Mg(2+)-binding site is contributed by Asp-78. Cys-119 contributes to the [2Fe-2S] cluster binding site. Positions 120 and 121 each coordinate Mg(2+). At Lys-121 the chain carries N6-carboxylysine. Residue Cys-192 coordinates [2Fe-2S] cluster. Glu-443 contributes to the Mg(2+) binding site. The Proton acceptor role is filled by Ser-469.

The protein belongs to the IlvD/Edd family. As to quaternary structure, homodimer. [2Fe-2S] cluster is required as a cofactor. Mg(2+) serves as cofactor.

It carries out the reaction (2R)-2,3-dihydroxy-3-methylbutanoate = 3-methyl-2-oxobutanoate + H2O. The catalysed reaction is (2R,3R)-2,3-dihydroxy-3-methylpentanoate = (S)-3-methyl-2-oxopentanoate + H2O. Its pathway is amino-acid biosynthesis; L-isoleucine biosynthesis; L-isoleucine from 2-oxobutanoate: step 3/4. The protein operates within amino-acid biosynthesis; L-valine biosynthesis; L-valine from pyruvate: step 3/4. Its function is as follows. Functions in the biosynthesis of branched-chain amino acids. Catalyzes the dehydration of (2R,3R)-2,3-dihydroxy-3-methylpentanoate (2,3-dihydroxy-3-methylvalerate) into 2-oxo-3-methylpentanoate (2-oxo-3-methylvalerate) and of (2R)-2,3-dihydroxy-3-methylbutanoate (2,3-dihydroxyisovalerate) into 2-oxo-3-methylbutanoate (2-oxoisovalerate), the penultimate precursor to L-isoleucine and L-valine, respectively. This chain is Dihydroxy-acid dehydratase, found in Clostridium novyi (strain NT).